Here is a 359-residue protein sequence, read N- to C-terminus: Hereditary hemochromatosis protein homolog (359 aa).

An N-terminal signal peptide occupies residues 1-24; it reads MSLSAGLPVRPLLLLLLLLWSVAP. Residues 25 to 126 are alpha-1; the sequence is QALPPRSHSL…KVTKLGVVSE (102 aa). Over 25-318 the chain is Extracellular; that stretch reads QALPPRSHSL…WEPLQSQAMI (294 aa). Residues N114, N142, N166, and N246 are each glycosylated (N-linked (GlcNAc...) asparagine). Positions 127 to 217 are alpha-2; that stretch reads SHILQVVLGC…ELGRGVLGQQ (91 aa). Intrachain disulfides connect C136–C199 and C237–C294. Residues 218-309 form an alpha-3 region; the sequence is VPTLVKVTRH…GLDQPLTASW (92 aa). In terms of domain architecture, Ig-like C1-type spans 219–308; sequence PTLVKVTRHW…PGLDQPLTAS (90 aa). The connecting peptide stretch occupies residues 310 to 318; sequence EPLQSQAMI. The helical transmembrane segment at 319-339 threads the bilayer; that stretch reads IGIISGVTVCAIFLVGILFLI. The Cytoplasmic segment spans residues 340–359; sequence LRKRKASGGTMGGYVLTDCE.

Belongs to the MHC class I family. In terms of assembly, binds TFR through the extracellular domain in a pH-dependent manner.

The protein localises to the cell membrane. In terms of biological role, binds to transferrin receptor (TFR) and reduces its affinity for iron-loaded transferrin. This chain is Hereditary hemochromatosis protein homolog (Hfe), found in Mus musculus (Mouse).